The chain runs to 1048 residues: PH and SEC7 domain-containing protein 3 (1048 aa).

The span at 36-45 (SEGKAPDTSD) shows a compositional bias: basic and acidic residues. Positions 36–57 (SEGKAPDTSDHGGSTLLPPNVT) are disordered. Phosphoserine is present on Ser76. Disordered regions lie at residues 104 to 126 (LDSV…LKEQ), 310 to 342 (GGDK…KVPR), 364 to 383 (SWKA…SPVR), and 395 to 434 (QENK…PGYT). Residues 311–321 (GDKRETQHPID) show a composition bias toward basic and acidic residues. Over residues 397 to 423 (NKQHLEKTPKPERDRERISEQEEHVKG) the composition is skewed to basic and acidic residues. The SEC7 domain maps to 534–734 (TKGTPEIAFW…KALYNSIKNE (201 aa)). The segment covering 741-758 (DDEEKKKSPSESTEEKAN) has biased composition (basic and acidic residues). A disordered region spans residues 741–769 (DDEEKKKSPSESTEEKANGTHPKTISRIG). At Ser770 the chain carries Phosphoserine. A PH domain is found at 785–898 (AVYKSGFLAR…WINKINCVAA (114 aa)). A coiled-coil region spans residues 922–952 (ATTTKLSQEEQLKSHESKLKQITTELAEHRS). The tract at residues 999 to 1048 (DESEAAGLKKSHSSPSLNPDTSPITAKVKRNVSERKDHRPETPSIKQKVT) is disordered. Phosphoserine occurs at positions 1009, 1011, 1012, 1014, and 1020. Residues 1011–1022 (SSPSLNPDTSPI) show a composition bias toward polar residues. Over residues 1029–1039 (NVSERKDHRPE) the composition is skewed to basic and acidic residues.

As to expression, isoform 2 is expressed in epididymis (at protein level).

It is found in the cell membrane. The protein resides in the cell projection. It localises to the ruffle membrane. The protein localises to the postsynaptic density. Guanine nucleotide exchange factor for ARF6. The protein is PH and SEC7 domain-containing protein 3 (PSD3) of Homo sapiens (Human).